The chain runs to 397 residues: Acetate kinase (397 aa).

Position 7 (Asn7) interacts with Mg(2+). Position 14 (Lys14) interacts with ATP. A substrate-binding site is contributed by Arg90. Asp147 serves as the catalytic Proton donor/acceptor. ATP contacts are provided by residues 207–211 (HLGNG), 282–284 (DFR), and 330–334 (GLGEN). Glu383 serves as a coordination point for Mg(2+).

It belongs to the acetokinase family. In terms of assembly, homodimer. The cofactor is Mg(2+). It depends on Mn(2+) as a cofactor.

It is found in the cytoplasm. The enzyme catalyses acetate + ATP = acetyl phosphate + ADP. Its pathway is metabolic intermediate biosynthesis; acetyl-CoA biosynthesis; acetyl-CoA from acetate: step 1/2. Catalyzes the formation of acetyl phosphate from acetate and ATP. Can also catalyze the reverse reaction. This Clostridium botulinum (strain Okra / Type B1) protein is Acetate kinase.